We begin with the raw amino-acid sequence, 637 residues long: ATP-dependent zinc metalloprotease FtsH (637 aa).

Residues 1–6 (MNNQGR) lie on the Cytoplasmic side of the membrane. Residues 7-27 (SILAWATLFIFVILLFNVFQS) traverse the membrane as a helical segment. The Periplasmic portion of the chain corresponds to 28–103 (DSLLGGRNNI…VVPLETRMNT (76 aa)). A helical membrane pass occupies residues 104-124 (FLGFLISWFPMLLLIGVWVFF). Topologically, residues 125–637 (MRQMHGGGKA…TKAKKENYAS (513 aa)) are cytoplasmic. 195–202 (GPPGTGKT) provides a ligand contact to ATP. His417 lines the Zn(2+) pocket. Glu418 is an active-site residue. Zn(2+)-binding residues include His421 and Asp495. Residues 603–637 (ENKFPFNDSSTIKIDKEKSPEKTKTTKAKKENYAS) form a disordered region. Residues 615–637 (KIDKEKSPEKTKTTKAKKENYAS) are compositionally biased toward basic and acidic residues.

It in the central section; belongs to the AAA ATPase family. The protein in the C-terminal section; belongs to the peptidase M41 family. In terms of assembly, homohexamer. The cofactor is Zn(2+).

The protein localises to the cell inner membrane. Acts as a processive, ATP-dependent zinc metallopeptidase for both cytoplasmic and membrane proteins. Plays a role in the quality control of integral membrane proteins. This chain is ATP-dependent zinc metalloprotease FtsH, found in Rickettsia conorii (strain ATCC VR-613 / Malish 7).